We begin with the raw amino-acid sequence, 102 residues long: Protein iss (102 aa).

In terms of biological role, increases serum survival and confers group II surface exclusion. This chain is Protein iss (iss), found in Escherichia coli.